The sequence spans 527 residues: Phosphoethanolamine transferase OpgE (527 aa).

Topologically, residues 1-33 (MNLTLKESLVTRSRVFSPWTAFYFLQSLLINLG) are periplasmic. A helical transmembrane segment spans residues 34–54 (LGYPFSLLYTAAFTAILLLLW). Topologically, residues 55–62 (RTLPRVQK) are cytoplasmic. Residues 63-83 (VLVGVSSLVAACYFPFAQAYG) traverse the membrane as a helical segment. Topologically, residues 84 to 106 (APNFNTLLALHSTNMEESTEILT) are periplasmic. Residues 107 to 127 (IFPWYSYLVGLFIFALGVIAI) traverse the membrane as a helical segment. The Cytoplasmic portion of the chain corresponds to 128-146 (RRKKENEKARWNTFDSLCL). A helical transmembrane segment spans residues 147–167 (VFSVATFFVAPVQNLAWGGVF). The Periplasmic portion of the chain corresponds to 168 to 527 (KLKDTGYPVF…LGTDIFDPKP (360 aa)).

The protein belongs to the phosphoethanolamine transferase family.

It is found in the cell inner membrane. Its pathway is glycan metabolism; osmoregulated periplasmic glucan (OPG) biosynthesis. Functionally, catalyzes the addition of a phosphoethanolamine moiety to the osmoregulated periplasmic glucan (OPG) backbone. The sequence is that of Phosphoethanolamine transferase OpgE (opgE) from Escherichia coli (strain K12).